The following is a 236-amino-acid chain: Peptidase E (236 aa).

Active-site charge relay system residues include Ser122, Asp137, and His159.

The protein belongs to the peptidase S51 family.

It is found in the cytoplasm. It carries out the reaction Dipeptidase E catalyzes the hydrolysis of dipeptides Asp-|-Xaa. It does not act on peptides with N-terminal Glu, Asn or Gln, nor does it cleave isoaspartyl peptides.. Its function is as follows. Hydrolyzes dipeptides containing N-terminal aspartate residues. May play a role in allowing the cell to use peptide aspartate to spare carbon otherwise required for the synthesis of the aspartate family of amino acids. This Shewanella sp. (strain W3-18-1) protein is Peptidase E.